Consider the following 372-residue polypeptide: PqqA peptide cyclase (372 aa).

The region spanning 4–220 (APPPLSVLLE…ETARRQLGDR (217 aa)) is the Radical SAM core domain. 3 residues coordinate [4Fe-4S] cluster: C18, C22, and C25.

This sequence belongs to the radical SAM superfamily. PqqE family. Interacts with PqqD. The interaction is necessary for activity of PqqE. [4Fe-4S] cluster serves as cofactor.

It catalyses the reaction [PQQ precursor protein] + S-adenosyl-L-methionine = E-Y cross-linked-[PQQ precursor protein] + 5'-deoxyadenosine + L-methionine + H(+). It functions in the pathway cofactor biosynthesis; pyrroloquinoline quinone biosynthesis. Its function is as follows. Catalyzes the cross-linking of a glutamate residue and a tyrosine residue in the PqqA protein as part of the biosynthesis of pyrroloquinoline quinone (PQQ). This Xanthomonas axonopodis pv. citri (strain 306) protein is PqqA peptide cyclase.